The chain runs to 744 residues: FNIP repeat-containing protein cigB (744 aa).

FNIP repeat units follow at residues 340–376, 383–422, 426–462, 469–508, 512–550, 555–594, 598–635, 641–678, and 684–723; these read FNQK…TVTT, FNQK…TVIL, FNQK…TVTR, FNQK…TITL, FNQK…TTVR, FNQK…VTTV, and FNQK…NVYI.

The polypeptide is FNIP repeat-containing protein cigB (cigB) (Dictyostelium discoideum (Social amoeba)).